Here is an 874-residue protein sequence, read N- to C-terminus: Alanine--tRNA ligase (874 aa).

Residues His562, His566, Cys664, and His668 each coordinate Zn(2+).

Belongs to the class-II aminoacyl-tRNA synthetase family. The cofactor is Zn(2+).

Its subcellular location is the cytoplasm. It catalyses the reaction tRNA(Ala) + L-alanine + ATP = L-alanyl-tRNA(Ala) + AMP + diphosphate. Its function is as follows. Catalyzes the attachment of alanine to tRNA(Ala) in a two-step reaction: alanine is first activated by ATP to form Ala-AMP and then transferred to the acceptor end of tRNA(Ala). Also edits incorrectly charged Ser-tRNA(Ala) and Gly-tRNA(Ala) via its editing domain. The protein is Alanine--tRNA ligase of Shewanella sp. (strain MR-7).